Consider the following 150-residue polypeptide: Arginine repressor (150 aa).

This sequence belongs to the ArgR family.

It is found in the cytoplasm. It functions in the pathway amino-acid biosynthesis; L-arginine biosynthesis [regulation]. Its function is as follows. Regulates arginine biosynthesis genes. The polypeptide is Arginine repressor (Staphylococcus epidermidis (strain ATCC 35984 / DSM 28319 / BCRC 17069 / CCUG 31568 / BM 3577 / RP62A)).